A 465-amino-acid polypeptide reads, in one-letter code: Mothers against decapentaplegic homolog 1 (465 aa).

M1 carries the N-acetylmethionine modification. In terms of domain architecture, MH1 spans 12–136; it reads PAVKRLLGWK…YKRVESPVLP (125 aa). Residues C64, C109, C121, and H126 each coordinate Zn(2+). A disordered region spans residues 162–246; that stretch reads NEPHMPLNAT…DGSQPMDTNM (85 aa). Residues 179–212 are compositionally biased toward low complexity; that stretch reads PNSHPFPHSPNSSYPNSPGGSSSTYPHSPTSSDP. Positions 221 to 232 are enriched in pro residues; the sequence is DTPPPAYLPPED. An MH2 domain is found at 271–465; that stretch reads WCSIVYYELN…SPHNPISSVS (195 aa). The residue at position 322 (T322) is a Phosphothreonine; by MINK1, TNIK and MAP4K4. Positions 418 to 428 are L3 loop; that stretch reads KGWGAEYHRQD. Phosphoserine occurs at positions 463 and 465.

Belongs to the dwarfin/SMAD family. In terms of assembly, found in a complex with SMAD4 and YY1. Interacts with HGS, NANOG and ZCCHC12. Upon C-terminus phosphorylation: forms trimers with another SMAD1 and the co-SMAD SMAD4. Interacts with PEBP2-alpha subunit, CREB-binding protein (CBP), p300, SMURF1, SMURF2, USP15 and HOXC8. Associates with ZNF423 or ZNF521 in response to BMP2 leading to activate transcription of BMP target genes. Interacts with SKOR1. Interacts (via MH2 domain) with LEMD3. Binding to LEMD3 results in at least a partial reduction of receptor-mediated phosphorylation. Forms a ternary complex with PSMB4 and OAZ1 before PSMB4 is incorporated into the 20S proteasome. Interacts (via MH2 domain) with FAM83G (via MH2 domain); in a SMAD4-independent manner. Interacts with ZC3H3. Interacts with TMEM119. Interacts (via MH1 and MH2 domains) with ZNF8. Interacts with RANBP3L; the interaction increases when SMAD1 is not phosphorylated and mediates SMAD1 nuclear export. Interacts with EGR1; this interaction inhibits SMAD1 dephosphorylation. Interacts with SMAD6. Interacts with YAP1. Interacts with MTMR4; negatively regulates BMP signaling through SMAD1 dephosphorylation and retention in endosomes. Phosphorylation of the C-terminal SVS motif by BMP type 1 receptor kinase activates SMAD1 by promoting dissociation from the receptor and trimerization with SMAD4. Phosphorylation by ERK2 MAP kinase in response to EGF or HGF prevents SMAD1 nuclear accumulation and transcriptional activity in response to BMP. Dephosphorylation, probably by PPM1A, induces its export from the nucleus to the cytoplasm. Dephosphorylation is inhibited by association with EGR1. Phosphorylation by CDK8/9 creates binding sites for YAP1, and subsequent phosphorylation by GSK3 switches off YAP1 binding and adds binding sites for SMURF1. Post-translationally, ubiquitinated by SMAD-specific E3 ubiquitin ligase SMURF1, leading to its degradation. Monoubiquitinated, leading to prevent DNA-binding. Deubiquitination by USP15 alleviates inhibition and promotes activation of TGF-beta target genes. Dephosphorylation, probably by PPM1A, induces its export from the nucleus to the cytoplasm. Phospho-SMAD1 is ubiquitinated by CHIP leading to disruption of the SMAD1-SMAD4 complex. Ubiquitous.

The protein localises to the cytoplasm. The protein resides in the nucleus. Its function is as follows. Transcriptional modulator that plays a role in various cellular processes, including embryonic development, cell differentiation, and tissue homeostasis. Upon BMP ligand binding to their receptors at the cell surface, is phosphorylated by activated type I BMP receptors (BMPRIs) and associates with SMAD4 to form a heteromeric complex which translocates into the nucleus acting as transcription factor. In turn, the hetero-trimeric complex recognizes cis-regulatory elements containing Smad Binding Elements (SBEs) to modulate the outcome of the signaling network. SMAD1/OAZ1/PSMB4 complex mediates the degradation of the CREBBP/EP300 repressor SNIP1. Positively regulates BMP4-induced expression of odontogenic development regulator MSX1 following IPO7-mediated nuclear import. The protein is Mothers against decapentaplegic homolog 1 (Smad1) of Mus musculus (Mouse).